Reading from the N-terminus, the 588-residue chain is 3-methylmercaptopropionyl-CoA dehydrogenase (588 aa).

Catalysis depends on E435, which acts as the Proton acceptor.

This sequence belongs to the acyl-CoA dehydrogenase family. Requires FAD as cofactor.

It carries out the reaction 3-(methylsulfanyl)propanoyl-CoA + oxidized [electron-transfer flavoprotein] + H(+) = 3-(methylsulfanyl)acryloyl-CoA + reduced [electron-transfer flavoprotein]. Involved in the assimilation of dimethylsulphoniopropionate (DMSP), an important compound in the fixation of carbon in marine phytoplankton, by mediating the conversion of 3-(methylthio)propanoyl-CoA (MMPA-CoA) to 3-(methylthio)acryloyl-CoA (MTA-CoA). In Ruegeria pomeroyi (strain ATCC 700808 / DSM 15171 / DSS-3) (Silicibacter pomeroyi), this protein is 3-methylmercaptopropionyl-CoA dehydrogenase.